A 393-amino-acid polypeptide reads, in one-letter code: Nucleosome assembly protein 1-like 1-B (393 aa).

A compositionally biased stretch (basic and acidic residues) spans M1 to T10. The segment at M1–Q38 is disordered. Acidic residues predominate over residues E11–E30. Positions Y126–A151 match the NAP1L motif motif. Residues I274–H280 carry the Nuclear localization signal motif. Residues A347–P377 are compositionally biased toward acidic residues. The segment at A347–Q393 is disordered.

The protein belongs to the nucleosome assembly protein (NAP) family. In terms of assembly, forms homomultimers. Interacts with histone b4. Interacts with the B-type cyclins ccnb1 and ccnb2. Post-translationally, phosphorylated by cyclin B-cdc2 kinase complexes.

It localises to the cytoplasm. The protein localises to the nucleus. In terms of biological role, acts as a chaperone for the linker histone to facilitate deposition of histone B4 onto linker DNA. Required for both remodeling of sperm chromatin into nucleosomes, and linker histone binding to nucleosome core dimers. Plays a role in tissue-specific gene regulation. Required for primitive hemopoiesis, acting upstream of tal1/scl. The chain is Nucleosome assembly protein 1-like 1-B (nap1l1-b) from Xenopus laevis (African clawed frog).